A 321-amino-acid polypeptide reads, in one-letter code: MAVKPTKAEKKIAYDQKLCQLLDEYSQVLIASADNVGSNQLQAIRIGLRGDSIVLMGKNTMMKRSIRLHAENTGNENLRNVEQLFLPNVGLIFTKGDLNQVREEISKYKVGAPARFGLVAPIDVVVPPGNTGLDPSQTSFFQVLNIPTKINKGTVEIITAVELIKKGEKVGSSEAALLAKLGIRPFSYGLNVESVYDDGSVFSPEVLDLTEDDLLARFATGVSMVTSLSLAISYPTLAAAPHSSSMGATMFLLLLLQPTMTSLRPRKLRSISRILAVASCSCSSAGTAPTGGGAAAAAVEEKKEEPEEESDDDIGFSLFDD.

The segment at 284 to 321 (SAGTAPTGGGAAAAAVEEKKEEPEEESDDDIGFSLFDD) is disordered. Acidic residues predominate over residues 306–321 (PEEESDDDIGFSLFDD).

The protein belongs to the universal ribosomal protein uL10 family. P0 forms a pentameric complex by interaction with dimers of P1 and P2. In terms of processing, phosphorylated.

In terms of biological role, ribosomal protein P0 is the functional equivalent of E.coli protein L10. The chain is Large ribosomal subunit protein uL10 from Oxybasis rubra (Red goosefoot).